Consider the following 195-residue polypeptide: Probable DNA-directed RNA polymerase subunit delta (195 aa).

The HTH HARE-type domain occupies leucine 14–tryptophan 81. The disordered stretch occupies residues threonine 91–glutamate 195. Composition is skewed to acidic residues over residues threonine 116 to leucine 171 and phenylalanine 179 to glutamate 195.

Belongs to the RpoE family. RNAP is composed of a core of 2 alpha, a beta and a beta' subunits. The core is associated with a delta subunit and one of several sigma factors.

In terms of biological role, participates in both the initiation and recycling phases of transcription. In the presence of the delta subunit, RNAP displays an increased specificity of transcription, a decreased affinity for nucleic acids, and an increased efficiency of RNA synthesis because of enhanced recycling. In Limosilactobacillus fermentum (strain NBRC 3956 / LMG 18251) (Lactobacillus fermentum), this protein is Probable DNA-directed RNA polymerase subunit delta.